The sequence spans 449 residues: UDP-N-acetylmuramoylalanine--D-glutamate ligase (449 aa).

118 to 124 (GTNGKTT) is an ATP binding site.

Belongs to the MurCDEF family.

The protein localises to the cytoplasm. It carries out the reaction UDP-N-acetyl-alpha-D-muramoyl-L-alanine + D-glutamate + ATP = UDP-N-acetyl-alpha-D-muramoyl-L-alanyl-D-glutamate + ADP + phosphate + H(+). It functions in the pathway cell wall biogenesis; peptidoglycan biosynthesis. In terms of biological role, cell wall formation. Catalyzes the addition of glutamate to the nucleotide precursor UDP-N-acetylmuramoyl-L-alanine (UMA). The polypeptide is UDP-N-acetylmuramoylalanine--D-glutamate ligase (Staphylococcus epidermidis (strain ATCC 35984 / DSM 28319 / BCRC 17069 / CCUG 31568 / BM 3577 / RP62A)).